The primary structure comprises 462 residues: ATP synthase subunit beta 2 (462 aa).

151–158 (GGAGVGKT) provides a ligand contact to ATP.

The protein belongs to the ATPase alpha/beta chains family. In terms of assembly, F-type ATPases have 2 components, CF(1) - the catalytic core - and CF(0) - the membrane proton channel. CF(1) has five subunits: alpha(3), beta(3), gamma(1), delta(1), epsilon(1). CF(0) has three main subunits: a(1), b(2) and c(9-12). The alpha and beta chains form an alternating ring which encloses part of the gamma chain. CF(1) is attached to CF(0) by a central stalk formed by the gamma and epsilon chains, while a peripheral stalk is formed by the delta and b chains.

The protein localises to the cell inner membrane. It catalyses the reaction ATP + H2O + 4 H(+)(in) = ADP + phosphate + 5 H(+)(out). Functionally, produces ATP from ADP in the presence of a proton gradient across the membrane. The catalytic sites are hosted primarily by the beta subunits. The sequence is that of ATP synthase subunit beta 2 from Chlorobaculum tepidum (strain ATCC 49652 / DSM 12025 / NBRC 103806 / TLS) (Chlorobium tepidum).